An 885-amino-acid polypeptide reads, in one-letter code: MSTVEPNAYDPQQVETSAQQFWDATRAFQVDENSDKPKFYCLSMLPYPSGALHMGHVRNYTISDVVSRYKRMTGHNVLQPMGWDAFGLPAENAAIKNKTAPAKWTYANIEHMRAQLKSLGYAIDWSREFATCTPDYYVHEQRMFTRLMRKGLAYRRNAVVNWDPIDQTVLANEQVIDGRGWRSGALVEKREIPQWFLRITDYAQELLDGLDQLDGWPDSVKTMQRNWIGRSEGLEIQFDVRDTTGAALDPLRVFTTRPDTLMGVTFVSIAAEHPLAQHAAKSNPELASMLETLKHGGVSEAELETQEKRGMATGLTAVHPISGEEVPVWVANFVLMGYGTGAVMAVPGHDQRDFEFANKYGLPIVQVVKLREPRNDDEQAWDATQWRDWYTDKSRELELINSAEFDGLDYHGAFEALAERFERKGQGQRRINYRLRDWGVSRQRYWGCPIPVIYCAKCGAVPVPEDQLPVVLPENVEFAGTGSPIKTDPTWRQTTCPECGGPAERETDTFDTFMESSWYVARYTSPNARDMVDRRANYWMPADLYVGGIEHAILHLMYFRFYHKLMRDARLVDSDEPVTNLLTQGMVIAETFYRDADNGGKDWINPADVEIQRDERGRVVGASLIADGQPVHIGGTEKMSKSKNNGVDPQAMVAKYGADTVRLFSMFAAPPEQSLEWNEAGVDGMARFMRRLWVQVHKHVGEGIDDELTKIVALGGPLSAEQKAIRRKTHETIGKVDDDYGRRHSFNTAIAAVMELSNALAKFDDASAQGRAVRQEALEAMVLLLNPITPHASHALWQVLGRGETLLENVPFPQVDAAALVRDALTLAIQVNGKLRGTIEVAADAAREQIEALALAEPNAAKFLDGLSVRKIIIVPGKIVNIVAG.

Positions 46-56 (PYPSGALHMGH) match the 'HIGH' region motif. The short motif at 638–642 (KMSKS) is the 'KMSKS' region element. Residue Lys-641 coordinates ATP.

Belongs to the class-I aminoacyl-tRNA synthetase family.

Its subcellular location is the cytoplasm. The enzyme catalyses tRNA(Leu) + L-leucine + ATP = L-leucyl-tRNA(Leu) + AMP + diphosphate. The sequence is that of Leucine--tRNA ligase from Xanthomonas campestris pv. campestris (strain B100).